The chain runs to 488 residues: RNA binding exosome specificity factor Mmi1 (488 aa).

Polar residues-rich tracts occupy residues 1–14, 33–47, and 54–66; these read MSNT…SSKS, LNES…TTHT, and SVLS…NFSS. 2 disordered regions span residues 1 to 20 and 25 to 80; these read MSNT…ELPN and RSLW…DAPI. Residues 71–80 show a composition bias toward basic and acidic residues; that stretch reads PAPESHDAPI. An interaction with erh1 region spans residues 95–122; it reads GKYDFSRHCTDYGHSYEWPYFRSLRRES. Disordered stretches follow at residues 163–185 and 225–261; these read SRLH…RRLA and SYPV…TRAS. Phosphothreonine is present on Thr-176. 6 positions are modified to phosphoserine: Ser-178, Ser-230, Ser-231, Ser-261, Ser-263, and Ser-265. The segment covering 289–299 has biased composition (low complexity); it reads SYLLSNSSNDS. Positions 289-328 are disordered; that stretch reads SYLLSNSSNDSASRKEKPKARASTPPPLNFSRASEHRNEK. Ser-311 bears the Phosphoserine mark. Thr-312 carries the phosphothreonine modification. The 127-residue stretch at 350–476 folds into the YTH domain; sequence SRYFIMLCDN…DEGSRLCTLI (127 aa).

As to quaternary structure, component of the erh1-mmi1 complex composed of mmi1 and erh1. Interacts (via N-terminus) with erh1 in a 2:2 stoichiometry. Interacts with rrp6.

The protein resides in the nucleus. RNA-binding protein that recognizes and binds N6-methyladenosine (m6A)-containing RNAs, a modification present at internal sites of mRNAs and some non-coding RNAs. Functions alone and as part of the erh1-mmi1 complex, to recruit the CCR4-NOT complex and the NURS complex to target RNAs. Suppresses the meiotic program during vegetative growth and promotes the meiotic program during mating. Binds to DSR (determinant of selective removal) regions in meiotic mRNA, and recruits the NURS complex to targets. Recruitment of NURS complex to target mRNAs promotes mRNA decay by engagement of the nuclear exosome, and formation of heterochromatin islands at meiotic genes silenced by the exosome. Recruitment of the CCR4-NOT complex to target RNAs promotes heterochromatin formation at RNAi-dependent heterochromatin domains (HOODs), including a subset of meiotic genes, lncRNAs and retrotransposons. Recruitment of the CCR4-NOT complex to rDNA promotes rDNA heterochromatin assembly. Promotes non-canonical transcription termination at meiotic genes and prevents lncRNA transcription from invading and repressing adjacent genes. The protein is RNA binding exosome specificity factor Mmi1 (mmi1) of Schizosaccharomyces pombe (strain 972 / ATCC 24843) (Fission yeast).